The primary structure comprises 1401 residues: MEVLMAERADLVFHNKVIDGTAMKRLISRLIDHFGIAYTSHILDQVKTLGFQQATATSISLGIDDLLTTPSKRWLVQDAEQQSLILEKHHHYGNVHAVEKLRQSIEIWYATSEYLRQEMNLNFKMTDPSNPVHIMSYSGARGNASQVHQLVGMRGLMSDPQGQMIDLPIQSNLREGLSLTEYTISCYGARKGVVDTAVRTSDAGYLTRRLVEVVQHIVVRRTDCGSTRGISVSFRKGMTERIFIQTLIGRVLANDVYLGLRCIATRNQDIGIGLVNRFMTSRAQPIYIRTPFTCRSASWICRLCYGRSPTHGDLVELGEAVGIIAGQSIGEPGTQLTLRTFHTGGVFTGGTAEHVRAPSNGKIKFNEDLVHPTRTRHGHPAFLCYVDLYVTIESQDIIHSVNIPPKSFLLVQNDQYVESEQVIAEIRAGTSTFHFKERVRKHIYSDSEGEMHWSTGVYHAPEYTHGNVHFLPKTSHLWILSGGPCKSSLVPFSLHKDQDQMNVQSLSVQERSISDFSVNNNRVKHKLFGSDPLARKGRRISDYAAGSERVISNGDGDFIYPAILRENSYLLAKRRRNRFIIPFQYDPEWEKELTPHSSTSITVEIPANGILRRNSILAYFDDPRYRRSSSGITKYGIIEVDSIVKKEGLVEYRRPKESRPKYQMKVDRFFVIPEEVHILPGSSSIMVRNNSIIGVDTRITFNTRSQIGGLVRIEKKKKIELKIFSGGIHFPGETDKISRHIGILIPPGARKKMDKGSKGKNWEGNNWVYVQRITPIKKKYFVSVRPVVTYEIADGINLVTLFPGDMLQEKDNLRLQVVNYILYGDGKPIRGISHTSIQLVRTCLVLNWDQDKKGSIEKVQASSAEVRANDLIRYFIRIDLVKSPILYTGKRNDRSGSVIPDTGSYCANTNLFSSKVKIKSLSQHQGTVRTFLNRNKEGQSLIVFSSSNCSRINVSKYHNVTKESIKEKEDTPIPILNLLGPLGTVPKIHNFSPSYHSITHNEILLNKYLILDNKNPKQTFQLLKYYLVDENGRISNANPCSDIIFNLFGSCFLPHDYCEGTSTTRIISLGQFICENVCLSKHGTRIKSGQVIMVYLDSFIIRSAKPYLATRGATVHGDYGEIFYEGDTLVTFIYEKSRSGDITHGLPKVEQVLEVRSIDSISMNLEKRVEGWNEHITGILGIPWGFLIGAELTIAQSRVSLVNKIQKVYRSQGVQIHNKHIEIIVRQITSKVLVSEDGMSNVFSPGELIGLLRAERAGRALEEAICYRAVLLGITRASLNTQSFISEASFQETARVLAKAALRGRIDWLKGLKENVVLGGMIPVGTGFKRFVHRSREYNNIPLEIQKKNFFGGEMRDILFHHRELFCSCIPKPKSFHNTSEQPFYAMGSNPIVHKSGFIIS.

Positions 224, 294, 301, and 304 each coordinate Zn(2+).

The protein belongs to the RNA polymerase beta' chain family. RpoC2 subfamily. In terms of assembly, in plastids the minimal PEP RNA polymerase catalytic core is composed of four subunits: alpha, beta, beta', and beta''. When a (nuclear-encoded) sigma factor is associated with the core the holoenzyme is formed, which can initiate transcription. Requires Zn(2+) as cofactor.

It is found in the plastid. The protein resides in the chloroplast. The catalysed reaction is RNA(n) + a ribonucleoside 5'-triphosphate = RNA(n+1) + diphosphate. DNA-dependent RNA polymerase catalyzes the transcription of DNA into RNA using the four ribonucleoside triphosphates as substrates. The sequence is that of DNA-directed RNA polymerase subunit beta'' from Nymphaea alba (White water-lily).